Here is a 244-residue protein sequence, read N- to C-terminus: PF03932 family protein CutC (244 aa).

It belongs to the CutC family.

It is found in the cytoplasm. The chain is PF03932 family protein CutC from Pasteurella multocida (strain Pm70).